The chain runs to 204 residues: Ras-related protein Rab-7L1 (204 aa).

GTP-binding residues include Ser33, Lys34, His35, Tyr36, Lys37, and Thr39. Positions 36–44 match the Effector region motif; it reads YKSTVGVDF. Phosphothreonine; by LRRK2 is present on Thr71. Position 72 is a phosphoserine (Ser72). Positions 126, 156, and 157 each coordinate GTP. Residues Cys203 and Cys204 are each lipidated (S-geranylgeranyl cysteine).

This sequence belongs to the small GTPase superfamily. Rab family. In terms of assembly, interacts with LRRK2 (via the N-terminus); this interaction is direct and stimulates kinase activity.

The protein localises to the cell membrane. It is found in the cytoplasm. The protein resides in the perinuclear region. It localises to the golgi apparatus. Its subcellular location is the golgi apparatus membrane. The protein localises to the trans-Golgi network. It is found in the cytoskeleton. Functionally, the small GTPases Rab are key regulators in vesicle trafficking. Essential for maintaining the integrity of endosome-trans-Golgi network structure. Together with LRRK2, plays a role in the retrograde trafficking pathway for recycling proteins, such as mannose 6 phosphate receptor (M6PR), between lysosomes and the Golgi apparatus in a retromer-dependent manner. Recruits LRRK2 to the Golgi apparatus and stimulates LRRK2 kinase activity. Stimulates phosphorylation of RAB10 'Thr-73' by LRRK2. Also regulates neuronal process morphology in the intact central nervous system (CNS). In Mus musculus (Mouse), this protein is Ras-related protein Rab-7L1 (Rab29).